Consider the following 2359-residue polypeptide: Pre-mRNA-processing-splicing factor 8B (2359 aa).

The segment at 1–50 (MWNIDGTSLAPPGTDGSRMQTPSHPADHPSYTAPSNRNTPTVPTPEDAEA) is disordered. Residues 32–41 (TAPSNRNTPT) show a composition bias toward polar residues. In terms of domain architecture, MPN spans 2129–2260 (TYIMPKNILK…LTSYKLTQAG (132 aa)).

It localises to the nucleus. Its function is as follows. Functions as a scaffold that mediates the ordered assembly of spliceosomal proteins and snRNAs. Required for the assembly of the U4/U6-U5 tri-snRNP complex. The chain is Pre-mRNA-processing-splicing factor 8B from Arabidopsis thaliana (Mouse-ear cress).